Reading from the N-terminus, the 369-residue chain is Protein arginine N-methyltransferase 1-A (369 aa).

One can recognise an SAM-dependent MTase PRMT-type domain in the interval 48-369 (KDYYFDSYAH…LSCSTDYRMR (322 aa)). His-61, Arg-70, Gly-94, Glu-116, and Glu-145 together coordinate S-adenosyl-L-methionine. Active-site residues include Glu-160 and Glu-169.

The protein belongs to the class I-like SAM-binding methyltransferase superfamily. Protein arginine N-methyltransferase family. As to quaternary structure, homodimer. Homooctamer; individual homodimers associates to form a homooctamer and homooligomerization is required for proper localization to the cell membrane. Individual homodimers can associate to form a homohexamer. Component of a complex with lsm14a/rap55a. Interacts with cirbp.

The protein resides in the nucleus. It localises to the nucleoplasm. The protein localises to the cytoplasm. Its subcellular location is the cytosol. The catalysed reaction is L-arginyl-[protein] + 2 S-adenosyl-L-methionine = N(omega),N(omega)-dimethyl-L-arginyl-[protein] + 2 S-adenosyl-L-homocysteine + 2 H(+). The enzyme catalyses L-arginyl-[protein] + S-adenosyl-L-methionine = N(omega)-methyl-L-arginyl-[protein] + S-adenosyl-L-homocysteine + H(+). It carries out the reaction N(omega)-methyl-L-arginyl-[protein] + S-adenosyl-L-methionine = N(omega),N(omega)-dimethyl-L-arginyl-[protein] + S-adenosyl-L-homocysteine + H(+). Arginine methyltransferase that methylates (mono and asymmetric dimethylation) the guanidino nitrogens of arginyl residues present in target proteins. Constitutes the main enzyme that mediates monomethylation and asymmetric dimethylation of histone H4 'Arg-4' (H4R3me1 and H4R3me2a, respectively), a specific tag for epigenetic transcriptional activation. Methylates cirbp to regulate its subcellular location. Acts transiently during metamorphosis as a transcription coactivator, enhancing thyroid hormone (T3) receptor (TR)-mediated transcription by enhancing TR binding to the T3 response element (TRE), and histone modification through recruitment of other coactivators. In Xenopus laevis (African clawed frog), this protein is Protein arginine N-methyltransferase 1-A (prmt1-a).